The chain runs to 330 residues: Fructose-1,6-bisphosphatase class 1 (330 aa).

Positions 84, 103, 105, and 106 each coordinate Mg(2+). Substrate is bound by residues 106–109 (DGSS), Asn196, and Lys262. Glu268 serves as a coordination point for Mg(2+).

It belongs to the FBPase class 1 family. As to quaternary structure, homotetramer. Mg(2+) serves as cofactor.

Its subcellular location is the cytoplasm. It carries out the reaction beta-D-fructose 1,6-bisphosphate + H2O = beta-D-fructose 6-phosphate + phosphate. The protein operates within carbohydrate biosynthesis; gluconeogenesis. The protein is Fructose-1,6-bisphosphatase class 1 of Shewanella putrefaciens (strain CN-32 / ATCC BAA-453).